A 120-amino-acid polypeptide reads, in one-letter code: Large ribosomal subunit protein bL19 (120 aa).

Belongs to the bacterial ribosomal protein bL19 family.

This protein is located at the 30S-50S ribosomal subunit interface and may play a role in the structure and function of the aminoacyl-tRNA binding site. This chain is Large ribosomal subunit protein bL19, found in Nostoc punctiforme (strain ATCC 29133 / PCC 73102).